Here is a 70-residue protein sequence, read N- to C-terminus: Probable ferredoxin TA0517 (70 aa).

4Fe-4S ferredoxin-type domains are found at residues 8 to 36 (TEMDVDRNLCNYCGACVGMCPTDAIWLDE) and 37 to 66 (TVIKIHEEKCIECGFCIVGCPTGAITAEWF). Residues Cys17, Cys20, Cys23, Cys27, Cys46, Cys49, Cys52, and Cys56 each contribute to the [4Fe-4S] cluster site.

[4Fe-4S] cluster serves as cofactor.

In terms of biological role, ferredoxins are iron-sulfur proteins that transfer electrons in a wide variety of metabolic reactions. This chain is Probable ferredoxin TA0517, found in Thermoplasma acidophilum (strain ATCC 25905 / DSM 1728 / JCM 9062 / NBRC 15155 / AMRC-C165).